Consider the following 320-residue polypeptide: Eukaryotic translation initiation factor 3 subunit G (320 aa).

Residues 1–59 (MPTGDFDSKPSWADQVEEEGEDDKCVTSELLKGIPLATGDTSPEPELLPGAPLPPPKEV) are disordered. 2 positions are modified to phosphoserine: Ser-8 and Ser-11. 2 positions are modified to phosphothreonine: Thr-38 and Thr-41. Ser-42, Ser-189, Ser-223, and Ser-264 each carry phosphoserine. The disordered stretch occupies residues 209 to 234 (KTGKYVPPSLRDGASRRGESMQPNRR). Positions 221–234 (GASRRGESMQPNRR) are enriched in basic and acidic residues. The RRM domain occupies 239–317 (ATIRVTNLSE…LILNVEWAKP (79 aa)).

Component of the eukaryotic translation initiation factor 3 (eIF-3) complex, which is composed of 13 subunits: EIF3A, EIF3B, EIF3C, EIF3D, EIF3E, EIF3F, EIF3G, EIF3H, EIF3I, EIF3J, EIF3K, EIF3L and EIF3M. The eIF-3 complex appears to include 3 stable modules: module A is composed of EIF3A, EIF3B, EIF3G and EIF3I; module B is composed of EIF3F, EIF3H, and EIF3M; and module C is composed of EIF3C, EIF3D, EIF3E, EIF3K and EIF3L. EIF3C of module C binds EIF3B of module A and EIF3H of module B, thereby linking the three modules. EIF3J is a labile subunit that binds to the eIF-3 complex via EIF3B. The eIF-3 complex interacts with RPS6KB1 under conditions of nutrient depletion. Mitogenic stimulation leads to binding and activation of a complex composed of MTOR and RPTOR, leading to phosphorylation and release of RPS6KB1 and binding of EIF4B to eIF-3. Interacts (via C-terminus) with AIFM1 (via N-terminus). Interacts with DHX33; the interaction is independent of RNA. Post-translationally, phosphorylated. Phosphorylation is enhanced upon serum stimulation.

The protein localises to the cytoplasm. It is found in the nucleus. Its subcellular location is the perinuclear region. In terms of biological role, RNA-binding component of the eukaryotic translation initiation factor 3 (eIF-3) complex, which is required for several steps in the initiation of protein synthesis. The eIF-3 complex associates with the 40S ribosome and facilitates the recruitment of eIF-1, eIF-1A, eIF-2:GTP:methionyl-tRNAi and eIF-5 to form the 43S pre-initiation complex (43S PIC). The eIF-3 complex stimulates mRNA recruitment to the 43S PIC and scanning of the mRNA for AUG recognition. The eIF-3 complex is also required for disassembly and recycling of post-termination ribosomal complexes and subsequently prevents premature joining of the 40S and 60S ribosomal subunits prior to initiation. The eIF-3 complex specifically targets and initiates translation of a subset of mRNAs involved in cell proliferation, including cell cycling, differentiation and apoptosis, and uses different modes of RNA stem-loop binding to exert either translational activation or repression. This subunit can bind 18S rRNA. (Microbial infection) In case of FCV infection, plays a role in the ribosomal termination-reinitiation event leading to the translation of VP2. In Homo sapiens (Human), this protein is Eukaryotic translation initiation factor 3 subunit G.